A 273-amino-acid chain; its full sequence is MTKLIIHLVSDSSVQTAKSAAHSALAQFTSLKPKLYHWPMIRNSELLKEVLSKIESKHGIVLYTIADQELRKTLTKFCYELKIPCISVISKIIKEMSVFSGIEIEKEQNYNYKFDKTYFDTLNAIDYAIRHDDGQLLNELQFADIILIGPSRTSKTPTSVFLAYNGLKTANIPYVYNCPFPDFIEKDIDQLVVGLVINPNRLIEIRETRLNLLQINENRNYTDFNIVQKECLEVKKICELRNWPVIDVSTKSIEETAALIMRIYYNKKNKYKK.

Position 149–156 (149–156) interacts with ADP; the sequence is GPSRTSKT.

Belongs to the pyruvate, phosphate/water dikinase regulatory protein family. PDRP subfamily.

The catalysed reaction is N(tele)-phospho-L-histidyl/L-threonyl-[pyruvate, phosphate dikinase] + ADP = N(tele)-phospho-L-histidyl/O-phospho-L-threonyl-[pyruvate, phosphate dikinase] + AMP + H(+). It carries out the reaction N(tele)-phospho-L-histidyl/O-phospho-L-threonyl-[pyruvate, phosphate dikinase] + phosphate + H(+) = N(tele)-phospho-L-histidyl/L-threonyl-[pyruvate, phosphate dikinase] + diphosphate. Functionally, bifunctional serine/threonine kinase and phosphorylase involved in the regulation of the pyruvate, phosphate dikinase (PPDK) by catalyzing its phosphorylation/dephosphorylation. The sequence is that of Putative pyruvate, phosphate dikinase regulatory protein from Rickettsia bellii (strain RML369-C).